A 125-amino-acid polypeptide reads, in one-letter code: Large ribosomal subunit protein bL17 (125 aa).

This sequence belongs to the bacterial ribosomal protein bL17 family. In terms of assembly, part of the 50S ribosomal subunit. Contacts protein L32.

The chain is Large ribosomal subunit protein bL17 from Blochmanniella floridana.